A 239-amino-acid polypeptide reads, in one-letter code: Large ribosomal subunit protein uL1 (239 aa).

This sequence belongs to the universal ribosomal protein uL1 family. In terms of assembly, part of the 50S ribosomal subunit.

Binds directly to 23S rRNA. The L1 stalk is quite mobile in the ribosome, and is involved in E site tRNA release. Functionally, protein L1 is also a translational repressor protein, it controls the translation of the L11 operon by binding to its mRNA. In Acidothermus cellulolyticus (strain ATCC 43068 / DSM 8971 / 11B), this protein is Large ribosomal subunit protein uL1.